A 218-amino-acid chain; its full sequence is Pyrrolidone-carboxylate peptidase (218 aa).

Residues Glu-81, Cys-144, and His-169 contribute to the active site.

Belongs to the peptidase C15 family. In terms of assembly, homotetramer.

It localises to the cytoplasm. The catalysed reaction is Release of an N-terminal pyroglutamyl group from a polypeptide, the second amino acid generally not being Pro.. Removes 5-oxoproline from various penultimate amino acid residues except L-proline. In Deinococcus radiodurans (strain ATCC 13939 / DSM 20539 / JCM 16871 / CCUG 27074 / LMG 4051 / NBRC 15346 / NCIMB 9279 / VKM B-1422 / R1), this protein is Pyrrolidone-carboxylate peptidase (pcp).